A 721-amino-acid polypeptide reads, in one-letter code: BRCA1-A complex subunit RAP80 (721 aa).

The tract at residues 1–65 (MPRRKKKGKE…GLQKTKIKQS (65 aa)) is disordered. The tract at residues 1-101 (MPRRKKKGKE…SEQEAREVNS (101 aa)) is necessary for transcriptional repression. Lys-20 is covalently cross-linked (Glycyl lysine isopeptide (Lys-Gly) (interchain with G-Cter in SUMO2)). At Ser-29 the chain carries Phosphoserine. Lys-31 participates in a covalent cross-link: Glycyl lysine isopeptide (Lys-Gly) (interchain with G-Cter in SUMO2). Ser-44 and Ser-46 each carry phosphoserine. The LR motif signature appears at 60–78 (TKIKQSSRAKCLAKRKIAQ). Residues Lys-75 and Lys-90 each participate in a glycyl lysine isopeptide (Lys-Gly) (interchain with G-Cter in SUMO2) cross-link. The UIM 1 domain maps to 80-99 (TEEEQFALALKMSEQEAREV). The disordered stretch occupies residues 93–204 (EQEAREVNSQ…SVSSGSWDQS (112 aa)). The tract at residues 97-103 (REVNSQE) is UIM-linker. Residues 100–200 (NSQEEEEEEL…EEPVSVSSGS (101 aa)) form a necessary for interaction with NR6A1 N-terminus region. A Phosphoserine modification is found at Ser-101. Residues 105–124 (EEEELLRKAIAESLNSCRPS) form the UIM 2 domain. The span at 117–130 (SLNSCRPSDASATR) shows a compositional bias: polar residues. Ser-140 carries the phosphoserine modification. Residues 194–204 (VSVSSGSWDQS) are compositionally biased toward low complexity. Residue Ser-205 is modified to Phosphoserine. Residue Lys-245 forms a Glycyl lysine isopeptide (Lys-Gly) (interchain with G-Cter in SUMO2) linkage. The interval 270–400 (TGGTVNYFWG…EEEPTTSHGQ (131 aa)) is AIR. Positions 334–369 (NECGQGEQASEKNEGISEDMGDEDKEERQESRASVW) are disordered. Residues 349-358 (ISEDMGDEDK) are compositionally biased toward acidic residues. Residues Lys-382 and Lys-387 each participate in a glycyl lysine isopeptide (Lys-Gly) (interchain with G-Cter in SUMO2) cross-link. A disordered region spans residues 391-418 (EEEPTTSHGQSSQGLFVEETSEEGNSVP). Residues 400 to 500 (QSSQGLFVEE…EIHTSTFSSS (101 aa)) are necessary for interaction with NR6A1 C-terminus. Residues Ser-402 and Ser-420 each carry the phosphoserine modification. A Glycyl lysine isopeptide (Lys-Gly) (interchain with G-Cter in SUMO2) cross-link involves residue Lys-429. Phosphoserine is present on Ser-467. The UBZ4-type zinc finger occupies 502 to 529 (QVSCPLCDQGFPPTKIERHAMYCNGLMG). Residues Cys-505, Cys-508, His-520, and Cys-524 each contribute to the Zn(2+) site. The interval 505–582 (CPLCDQGFPP…REYQCHVESC (78 aa)) is zinc-finger-like region. Residues Lys-544, Lys-559, Lys-562, and Lys-607 each participate in a glycyl lysine isopeptide (Lys-Gly) (interchain with G-Cter in SUMO2) cross-link. Ser-627 is subject to Phosphoserine. Residues Lys-635 and Lys-642 each participate in a glycyl lysine isopeptide (Lys-Gly) (interchain with G-Cter in SUMO2) cross-link. Residues Ser-655 and Ser-679 each carry the phosphoserine modification. Glycyl lysine isopeptide (Lys-Gly) (interchain with G-Cter in SUMO2) cross-links involve residues Lys-698 and Lys-699.

Belongs to the RAP80 family. Component of the ARISC complex, at least composed of UIMC1/RAP80, ABRAXAS1, BRCC3/BRCC36, BABAM2 and BABAM1/NBA1. Component of the BRCA1-A complex, at least composed of the BRCA1, BARD1, UIMC1/RAP80, ABRAXAS1, BRCC3/BRCC36, BABAM2 and BABAM1/NBA1. In the BRCA1-A complex, interacts directly with ABRAXAS1. Interacts with UBE2I. Interacts with NR6A1. Interacts with ESR1. Interacts with TSP57. Interacts with TRAIP. Sumoylated. Post-translationally, phosphorylated upon DNA damage by ATM or ATR.

It localises to the nucleus. In terms of biological role, ubiquitin-binding protein. Specifically recognizes and binds 'Lys-63'-linked ubiquitin. Plays a central role in the BRCA1-A complex by specifically binding 'Lys-63'-linked ubiquitinated histones H2A and H2AX at DNA lesions sites, leading to target the BRCA1-BARD1 heterodimer to sites of DNA damage at double-strand breaks (DSBs). The BRCA1-A complex also possesses deubiquitinase activity that specifically removes 'Lys-63'-linked ubiquitin on histones H2A and H2AX. Also weakly binds monoubiquitin but with much less affinity than 'Lys-63'-linked ubiquitin. May interact with monoubiquitinated histones H2A and H2B; the relevance of such results is however unclear in vivo. Does not bind Lys-48'-linked ubiquitin. May indirectly act as a transcriptional repressor by inhibiting the interaction of NR6A1 with the corepressor NCOR1. The chain is BRCA1-A complex subunit RAP80 (UIMC1) from Sus scrofa (Pig).